Reading from the N-terminus, the 389-residue chain is Chalcone synthase 1A (389 aa).

Residue Cys-164 is part of the active site.

Belongs to the thiolase-like superfamily. Chalcone/stilbene synthases family.

It catalyses the reaction (E)-4-coumaroyl-CoA + 3 malonyl-CoA + 3 H(+) = 2',4,4',6'-tetrahydroxychalcone + 3 CO2 + 4 CoA. It functions in the pathway secondary metabolite biosynthesis; flavonoid biosynthesis. In terms of biological role, the primary product of this enzyme is 4,2',4',6'-tetrahydroxychalcone (also termed naringenin-chalcone or chalcone) which can under specific conditions spontaneously isomerize into naringenin. In Solanum tuberosum (Potato), this protein is Chalcone synthase 1A (CHS1A).